The chain runs to 133 residues: Large ribosomal subunit protein uL15 (133 aa).

Residues 1-64 (MGLENLKPAK…QPLQRRLPKI (64 aa)) are disordered.

It belongs to the universal ribosomal protein uL15 family. As to quaternary structure, part of the 50S ribosomal subunit.

Functionally, binds to the 23S rRNA. The protein is Large ribosomal subunit protein uL15 of Helicobacter pylori (strain Shi470).